Consider the following 211-residue polypeptide: tRNA (guanine-N(7)-)-methyltransferase (211 aa).

Residues glutamate 44, aspartate 69, aspartate 96, and aspartate 118 each coordinate S-adenosyl-L-methionine. Residue aspartate 118 is part of the active site. Lysine 122 is a substrate binding site. The interaction with RNA stretch occupies residues 124 to 129 (RHEKRR). Residues aspartate 154 and 191–194 (TEYE) each bind substrate.

It belongs to the class I-like SAM-binding methyltransferase superfamily. TrmB family.

The enzyme catalyses guanosine(46) in tRNA + S-adenosyl-L-methionine = N(7)-methylguanosine(46) in tRNA + S-adenosyl-L-homocysteine. Its pathway is tRNA modification; N(7)-methylguanine-tRNA biosynthesis. Functionally, catalyzes the formation of N(7)-methylguanine at position 46 (m7G46) in tRNA. This Streptococcus equi subsp. zooepidemicus (strain MGCS10565) protein is tRNA (guanine-N(7)-)-methyltransferase.